The sequence spans 675 residues: Alpha-1,4-glucan:maltose-1-phosphate maltosyltransferase 1 (675 aa).

Alpha-maltose 1-phosphate-binding residues include Lys-264, Gln-324, and Asp-359. Asp-394 acts as the Nucleophile in catalysis. Asn-395 lines the alpha-maltose 1-phosphate pocket. Catalysis depends on Glu-423, which acts as the Proton donor. 534-535 (KY) contributes to the alpha-maltose 1-phosphate binding site.

The protein belongs to the glycosyl hydrolase 13 family. GlgE subfamily. As to quaternary structure, homodimer.

It catalyses the reaction alpha-maltose 1-phosphate + [(1-&gt;4)-alpha-D-glucosyl](n) = [(1-&gt;4)-alpha-D-glucosyl](n+2) + phosphate. With respect to regulation, is competitively inhibited by alpha-, beta- and gamma-cyclodextrins (cyclic maltooligosaccharides), unlike GlgE from M.tuberculosis. Its function is as follows. Maltosyltransferase that uses maltose 1-phosphate (M1P) as the sugar donor to elongate linear or branched alpha-(1-&gt;4)-glucans. Maltooligosaccharides with a degree of polymerization (DP) superior or equal to 4 are efficient acceptors, with DP6 being optimal in the GlgE-catalyzed polymerization with M1P. Is specific for the alpha-anomer of M1P as substrate, since the beta-anomer of M1P gives no activity. Alpha-D-glucose 1-phosphate cannot serve as a donor substrate, but alpha-maltosyl fluoride is an efficient donor in vitro. Exhibits an alpha-retaining catalytic mechanism, with evidence that maltooligosaccharide acceptors are extended at their non-reducing ends. Is also able to catalyze the reverse reaction in vitro, releasing M1P from glycogen or maltoheptaose in the presence of inorganic phosphate. Also catalyzes disproportionation reactions through maltosyl transfer between maltooligosaccharides. Is probably involved in a branched alpha-glucan biosynthetic pathway from trehalose, together with TreS, Mak and GlgB. This chain is Alpha-1,4-glucan:maltose-1-phosphate maltosyltransferase 1 (glgE1), found in Streptomyces coelicolor (strain ATCC BAA-471 / A3(2) / M145).